The chain runs to 172 residues: C-phycocyanin beta subunit (172 aa).

At N72 the chain carries N4-methylasparagine. 2 residues coordinate (2R,3E)-phycocyanobilin: C82 and C153.

The protein belongs to the phycobiliprotein family. As to quaternary structure, heterodimer of an alpha and a beta chain, which further assembles into trimers. The trimers assemble into hexamers, although these were not seen in the crystallographic studies. Part of 2 PBS rod complexes, the conventional CpcG-PBS rod and a photosystem I-specific CpcL-PBS rod, both of which include ferredoxin--NADP reductase (petH). Interacts with rod linker CpcC2 via the latter's N-terminal PBS-linker domain. Post-translationally, contains two covalently linked bilin chromophores.

Its subcellular location is the cellular thylakoid membrane. Light-harvesting photosynthetic bile pigment-protein from the phycobiliprotein complex (phycobilisome, PBS). Phycocyanin is the major phycobiliprotein in the PBS rod. The polypeptide is C-phycocyanin beta subunit (cpcB) (Synechocystis sp. (strain ATCC 27184 / PCC 6803 / Kazusa)).